The following is a 1761-amino-acid chain: Laminin subunit beta-4 (1761 aa).

The first 19 residues, 1 to 19 (MQFQLTLFLHLGWLSYSKA), serve as a signal peptide directing secretion. Positions 24–264 (NRGACHPTTG…ALYEMIVRGS (241 aa)) constitute a Laminin N-terminal domain. Asparagine 169, asparagine 229, and asparagine 246 each carry an N-linked (GlcNAc...) asparagine glycan. 19 disulfides stabilise this stretch: cysteine 265–cysteine 274, cysteine 267–cysteine 295, cysteine 297–cysteine 306, cysteine 309–cysteine 329, cysteine 332–cysteine 341, cysteine 334–cysteine 359, cysteine 362–cysteine 371, cysteine 374–cysteine 392, cysteine 395–cysteine 408, cysteine 397–cysteine 423, cysteine 425–cysteine 434, cysteine 437–cysteine 452, cysteine 455–cysteine 468, cysteine 457–cysteine 475, cysteine 477–cysteine 486, cysteine 489–cysteine 503, cysteine 506–cysteine 518, cysteine 508–cysteine 525, and cysteine 527–cysteine 536. 4 Laminin EGF-like domains span residues 265 to 331 (CFCN…ACRS), 332 to 394 (CSCN…ACIP), 395 to 454 (CECD…GCQP), and 455 to 505 (CDCN…GCSP). The region spanning 506–552 (CDCDIGGAYSNVCSPKNGQCECRPHVTGRSCSEPAPGYFFAPLNFYL) is the Laminin EGF-like 5; truncated domain. The Laminin IV type B domain occupies 545 to 763 (FAPLNFYLYE…LIISMSAKLH (219 aa)). 31 disulfide bridges follow: cysteine 769-cysteine 781, cysteine 771-cysteine 788, cysteine 790-cysteine 799, cysteine 802-cysteine 814, cysteine 817-cysteine 829, cysteine 819-cysteine 836, cysteine 838-cysteine 847, cysteine 850-cysteine 860, cysteine 863-cysteine 872, cysteine 865-cysteine 879, cysteine 882-cysteine 891, cysteine 894-cysteine 908, cysteine 913-cysteine 938, cysteine 940-cysteine 949, cysteine 952-cysteine 967, cysteine 970-cysteine 984, cysteine 972-cysteine 991, cysteine 994-cysteine 1003, cysteine 1006-cysteine 1019, cysteine 1022-cysteine 1043, cysteine 1024-cysteine 1050, cysteine 1052-cysteine 1061, cysteine 1064-cysteine 1077, cysteine 1080-cysteine 1092, cysteine 1082-cysteine 1099, cysteine 1101-cysteine 1110, cysteine 1113-cysteine 1125, cysteine 1128-cysteine 1140, cysteine 1130-cysteine 1147, cysteine 1149-cysteine 1158, and cysteine 1161-cysteine 1172. Laminin EGF-like domains follow at residues 769-816 (CKCH…GCHP), 817-862 (CHCH…SCHP), 863-910 (CPCN…PCRP), 911-969 (CLCP…PCQP), 970-1021 (CACN…TCRR), 1022-1079 (CSCH…GCQS), 1080-1127 (CDCD…RCIP), and 1128-1174 (CDCN…TCLQ). Asparagine 1016 carries N-linked (GlcNAc...) asparagine glycosylation. A glycan (N-linked (GlcNAc...) asparagine) is linked at asparagine 1055. A domain II region spans residues 1175–1375 (CHLCFDQWDH…PDIQILNEKV (201 aa)). N-linked (GlcNAc...) asparagine glycosylation is found at asparagine 1223, asparagine 1301, asparagine 1326, asparagine 1333, and asparagine 1354. Residues 1243 to 1301 (KVKDYHDSVRRQIMQLNEQLKAVYEFQDLKDTIERAKNEADLLLEDLQEEIDLQSSVLN) are a coiled coil. The tract at residues 1376-1408 (CGDPGNVPCVPLPCGGALCTGRKGHRKCRGPGC) is domain alpha. The segment at 1409–1761 (HGSLTLSTNA…QEKKYARCYS (353 aa)) is domain I. Residues 1416 to 1480 (TNALQKAQEA…SDSEEENINL (65 aa)) adopt a coiled-coil conformation. N-linked (GlcNAc...) asparagine glycosylation is found at asparagine 1469, asparagine 1517, asparagine 1587, asparagine 1596, asparagine 1609, and asparagine 1725. Residues 1525–1759 (IQKHMQLCED…VEQEKKYARC (235 aa)) are a coiled coil.

As to quaternary structure, laminin is a complex glycoprotein, consisting of three different polypeptide chains (alpha, beta, gamma), which are bound to each other by disulfide bonds into a cross-shaped molecule comprising one long and three short arms with globules at each end.

The protein localises to the secreted. It is found in the extracellular space. The protein resides in the extracellular matrix. It localises to the basement membrane. In terms of biological role, binding to cells via a high affinity receptor, laminin is thought to mediate the attachment, migration and organization of cells into tissues during embryonic development by interacting with other extracellular matrix components. This chain is Laminin subunit beta-4 (LAMB4), found in Homo sapiens (Human).